Consider the following 313-residue polypeptide: Small ribosomal subunit protein uS2 (313 aa).

Over residues 234-243 (DEEAKEEKTK) the composition is skewed to basic and acidic residues. The interval 234–313 (DEEAKEEKTK…ASKAEAEEGK (80 aa)) is disordered. Residues 244–256 (AKTTAKKVVTKKA) are compositionally biased toward basic residues. The segment covering 266-297 (AEKKSEKPTTEKRPTKEAAETKETSEEPKTKE) has biased composition (basic and acidic residues).

It belongs to the universal ribosomal protein uS2 family.

This Coxiella burnetii (strain Dugway 5J108-111) protein is Small ribosomal subunit protein uS2.